The chain runs to 237 residues: Lipoprotein-releasing system ATP-binding protein LolD (237 aa).

Positions isoleucine 8–alanine 236 constitute an ABC transporter domain. Glycine 40–serine 47 provides a ligand contact to ATP.

It belongs to the ABC transporter superfamily. Lipoprotein translocase (TC 3.A.1.125) family. In terms of assembly, the complex is composed of two ATP-binding proteins (LolD) and two transmembrane proteins (LolC and LolE).

It is found in the cell inner membrane. In terms of biological role, part of the ABC transporter complex LolCDE involved in the translocation of mature outer membrane-directed lipoproteins, from the inner membrane to the periplasmic chaperone, LolA. Responsible for the formation of the LolA-lipoprotein complex in an ATP-dependent manner. This chain is Lipoprotein-releasing system ATP-binding protein LolD, found in Leptospira interrogans serogroup Icterohaemorrhagiae serovar Lai (strain 56601).